Here is a 323-residue protein sequence, read N- to C-terminus: Mortality factor 4-like protein 1 (323 aa).

Residues 12–62 form the Tudor-knot domain; the sequence is QEGERVLCFHGPLLYEAKCVKVAIKDKQVKYFIHYSGWNKNWDEWVPESRV. Residues 77-143 form a disordered region; that stretch reads QKANQEQYAE…RKKRARVDPT (67 aa). Residues 94 to 227 are sufficient for interaction with SIN3A; it reads PGKKTSGLQQ…VAGIKEYFNV (134 aa). Lys-104 carries the N6-acetyllysine modification. The interval 125 to 191 is interaction with RB1-1; it reads STSETPQPPR…FYLPAKKNVD (67 aa). The sufficient for interaction with PHF12 stretch occupies residues 149-303; that stretch reads TFMNRVEVKV…FLKYLAKNSA (155 aa). Positions 152–323 constitute an MRG domain; it reads NRVEVKVKIP…APPEYHRKAV (172 aa). The segment at 284–305 is interaction with RB1-2; sequence LALLLNYLHDFLKYLAKNSATL.

As to quaternary structure, component of the NuA4 histone acetyltransferase complex which contains the catalytic subunit KAT5/TIP60 and the subunits EP400, TRRAP/PAF400, BRD8/SMAP, EPC1, DMAP1/DNMAP1, RUVBL1/TIP49, RUVBL2, ING3, actin, ACTL6A/BAF53A, MORF4L1/MRG15, MORF4L2/MRGX, MRGBP, YEATS4/GAS41, VPS72/YL1 and MEAF6. The NuA4 complex interacts with MYC and the adenovirus E1A protein. MORF4L1 may also participate in the formation of NuA4 related complexes which lack the KAT5/TIP60 catalytic subunit, but which include the SWI/SNF related protein SRCAP. Component of the mSin3A histone deacetylase complex, which includes SIN3A, HDAC2, ARID4B, MORF4L1, RBBP4/RbAp48, and RBBP7/RbAp46. May also interact with PHF12 and one or more as yet undefined members of the TLE (transducin-like enhancer of split) family of transcriptional repressors. Component of the SIN3B complex, which includes SIN3B, HDAC2 or HDAC1, PHF12 and MORF4L1. Interacts with RB1 and KAT8. Interacts with the N-terminus of MRFAP1. Found in a complex composed of MORF4L1, MRFAP1 and RB1. Interacts with the entire BRCA complex, which contains BRCA1, PALB2, BRCA2 and RAD51. Interacts with PALB2. Forms a complex with MSL1 and NUPR1.

Its subcellular location is the nucleus. Functionally, component of the NuA4 histone acetyltransferase (HAT) complex which is involved in transcriptional activation of select genes principally by acetylation of nucleosomal histones H4 and H2A. This modification may both alter nucleosome - DNA interactions and promote interaction of the modified histones with other proteins which positively regulate transcription. This complex may be required for the activation of transcriptional programs associated with oncogene and proto-oncogene mediated growth induction, tumor suppressor mediated growth arrest and replicative senescence, apoptosis, and DNA repair. The NuA4 complex ATPase and helicase activities seem to be, at least in part, contributed by the association of RUVBL1 and RUVBL2 with EP400. NuA4 may also play a direct role in DNA repair when directly recruited to sites of DNA damage. As part of the SIN3B complex represses transcription and counteracts the histone acetyltransferase activity of EP300 through the recognition H3K27ac marks by PHF12 and the activity of the histone deacetylase HDAC2. SIN3B complex is recruited downstream of the constitutively active genes transcriptional start sites through interaction with histones and mitigates histone acetylation and RNA polymerase II progression within transcribed regions contributing to the regulation of transcription. Required for homologous recombination repair (HRR) and resistance to mitomycin C (MMC). Involved in the localization of PALB2, BRCA2 and RAD51, but not BRCA1, to DNA-damage foci. The chain is Mortality factor 4-like protein 1 (Morf4l1) from Rattus norvegicus (Rat).